The chain runs to 89 residues: Small ribosomal subunit protein uS15 (89 aa).

The protein belongs to the universal ribosomal protein uS15 family. Part of the 30S ribosomal subunit. Forms a bridge to the 50S subunit in the 70S ribosome, contacting the 23S rRNA.

Functionally, one of the primary rRNA binding proteins, it binds directly to 16S rRNA where it helps nucleate assembly of the platform of the 30S subunit by binding and bridging several RNA helices of the 16S rRNA. In terms of biological role, forms an intersubunit bridge (bridge B4) with the 23S rRNA of the 50S subunit in the ribosome. The protein is Small ribosomal subunit protein uS15 of Nitrosomonas eutropha (strain DSM 101675 / C91 / Nm57).